The following is a 141-amino-acid chain: Galactose-6-phosphate isomerase subunit LacA (141 aa).

The protein belongs to the LacAB/RpiB family. In terms of assembly, heteromultimeric protein consisting of LacA and LacB.

It carries out the reaction aldehydo-D-galactose 6-phosphate = keto-D-tagatose 6-phosphate. Its pathway is carbohydrate metabolism; D-galactose 6-phosphate degradation; D-tagatose 6-phosphate from D-galactose 6-phosphate: step 1/1. This Streptococcus pneumoniae serotype 4 (strain ATCC BAA-334 / TIGR4) protein is Galactose-6-phosphate isomerase subunit LacA.